Consider the following 99-residue polypeptide: Large ribosomal subunit protein uL23 (99 aa).

Belongs to the universal ribosomal protein uL23 family. In terms of assembly, part of the 50S ribosomal subunit. Contacts protein L29, and trigger factor when it is bound to the ribosome.

In terms of biological role, one of the early assembly proteins it binds 23S rRNA. One of the proteins that surrounds the polypeptide exit tunnel on the outside of the ribosome. Forms the main docking site for trigger factor binding to the ribosome. This chain is Large ribosomal subunit protein uL23, found in Lachnoclostridium phytofermentans (strain ATCC 700394 / DSM 18823 / ISDg) (Clostridium phytofermentans).